Here is a 602-residue protein sequence, read N- to C-terminus: Protein nessun dorma (602 aa).

Residues 188 to 208 (AEAKYIQQRLDYLELDLSDAE) are a coiled coil.

In terms of assembly, interacts (via N-terminus) with both members of the centralspindlin complex, Pav and Tum. As to expression, detected in testis (at protein level). Also expressed in ovary.

It is found in the midbody. Functionally, required during male meiosis for completion of spermatocyte cytokinesis and possibly also required in female germline cells. Also involved in ring canal formation in male and female germline cells. Not essential for cleavage furrow ingression but is required for contractile ring stability and the attachment of the furrowing membrane to the actomyosin ring in late telophase. Displays high binding affinity for beta-galactosides. This chain is Protein nessun dorma, found in Drosophila melanogaster (Fruit fly).